We begin with the raw amino-acid sequence, 118 residues long: MASQSQGIQQLLQAEKRAAEKVSEARKRKNRRLKQAKEEAQAEIEQYRLQREKEFKAKEAAALGSHGSCSSEVEKETREKMTVLQNYFEQNRDEVLDNLLAFVCDIRPEIHENYRING.

Residue Ala-2 is modified to N-acetylalanine.

This sequence belongs to the V-ATPase G subunit family. In terms of assembly, V-ATPase is a heteromultimeric enzyme made up of two complexes: the ATP-hydrolytic V1 complex and the proton translocation V0 complex. The V1 complex consists of three catalytic AB heterodimers that form a heterohexamer, three peripheral stalks each consisting of EG heterodimers, one central rotor including subunits D and F, and the regulatory subunits C and H. The proton translocation complex V0 consists of the proton transport subunit a, a ring of proteolipid subunits c9c'', rotary subunit d, subunits e and f, and the accessory subunits ATP6AP1/Ac45 and ATP6AP2/PRR. In terms of tissue distribution, kidney; localizes to early distal nephron, encompassing thick ascending limbs and distal convoluted tubules (at protein level). Ubiquitous.

The protein resides in the apical cell membrane. In terms of biological role, subunit of the V1 complex of vacuolar(H+)-ATPase (V-ATPase), a multisubunit enzyme composed of a peripheral complex (V1) that hydrolyzes ATP and a membrane integral complex (V0) that translocates protons. V-ATPase is responsible for acidifying and maintaining the pH of intracellular compartments and in some cell types, is targeted to the plasma membrane, where it is responsible for acidifying the extracellular environment. In aerobic conditions, involved in intracellular iron homeostasis, thus triggering the activity of Fe(2+) prolyl hydroxylase (PHD) enzymes, and leading to HIF1A hydroxylation and subsequent proteasomal degradation. The chain is V-type proton ATPase subunit G 1 (Atp6v1g1) from Mus musculus (Mouse).